A 561-amino-acid polypeptide reads, in one-letter code: Putative periplasmic trehalase (561 aa).

The signal sequence occupies residues 1 to 30; that stretch reads MKSPAPSRPQKMALIPACIFLCFAALSVQA. Substrate-binding positions include arginine 148, 155 to 156, asparagine 192, 201 to 203, 273 to 275, and glycine 306; these read WD, RSQ, and RPE. Catalysis depends on proton donor/acceptor residues aspartate 308 and glutamate 492. Glutamate 507 is a substrate binding site. Positions 535-561 are disordered; the sequence is CDNVPATRPLSESTTQPVKQKEAEPTP.

Belongs to the glycosyl hydrolase 37 family. As to quaternary structure, monomer.

The protein localises to the periplasm. The catalysed reaction is alpha,alpha-trehalose + H2O = alpha-D-glucose + beta-D-glucose. Provides the cells with the ability to utilize trehalose at high osmolarity by splitting it into glucose molecules that can subsequently be taken up by the phosphotransferase-mediated uptake system. In Escherichia coli O157:H7, this protein is Putative periplasmic trehalase.